The sequence spans 485 residues: Arginine biosynthesis bifunctional protein ArgJ, mitochondrial (485 aa).

Substrate-binding residues include Thr-185, Lys-214, Thr-225, and Glu-315. The active-site Nucleophile is the Thr-225.

It belongs to the ArgJ family. In terms of assembly, heterodimer of an alpha and a beta chain. The alpha and beta chains are autoproteolytically processed from a single precursor protein within the mitochondrion.

It is found in the mitochondrion matrix. The catalysed reaction is N(2)-acetyl-L-ornithine + L-glutamate = N-acetyl-L-glutamate + L-ornithine. It carries out the reaction L-glutamate + acetyl-CoA = N-acetyl-L-glutamate + CoA + H(+). Its pathway is amino-acid biosynthesis; L-arginine biosynthesis; L-ornithine and N-acetyl-L-glutamate from L-glutamate and N(2)-acetyl-L-ornithine (cyclic): step 1/1. The protein operates within amino-acid biosynthesis; L-arginine biosynthesis; N(2)-acetyl-L-ornithine from L-glutamate: step 1/4. Catalyzes two activities which are involved in the cyclic version of arginine biosynthesis: the synthesis of acetylglutamate from glutamate and acetyl-CoA, and of ornithine by transacetylation between acetylornithine and glutamate. The polypeptide is Arginine biosynthesis bifunctional protein ArgJ, mitochondrial (Penicillium rubens (strain ATCC 28089 / DSM 1075 / NRRL 1951 / Wisconsin 54-1255) (Penicillium chrysogenum)).